Consider the following 237-residue polypeptide: Ribonuclease PH (237 aa).

Residues Arg-86 and 124–126 contribute to the phosphate site; that span reads GTR.

It belongs to the RNase PH family. In terms of assembly, homohexameric ring arranged as a trimer of dimers.

The enzyme catalyses tRNA(n+1) + phosphate = tRNA(n) + a ribonucleoside 5'-diphosphate. Phosphorolytic 3'-5' exoribonuclease that plays an important role in tRNA 3'-end maturation. Removes nucleotide residues following the 3'-CCA terminus of tRNAs; can also add nucleotides to the ends of RNA molecules by using nucleoside diphosphates as substrates, but this may not be physiologically important. Probably plays a role in initiation of 16S rRNA degradation (leading to ribosome degradation) during starvation. The protein is Ribonuclease PH of Cereibacter sphaeroides (strain ATCC 17025 / ATH 2.4.3) (Rhodobacter sphaeroides).